The following is a 33-amino-acid chain: Fatty acid-binding protein, intestinal (33 aa).

This sequence belongs to the calycin superfamily. Fatty-acid binding protein (FABP) family. As to expression, intestine.

The protein localises to the cytoplasm. FABPs are thought to play a role in the intracellular transport of long-chain fatty acids and their acyl-CoA esters. The protein is Fatty acid-binding protein, intestinal (fabp2) of Rhamdia sapo (South American catfish).